The sequence spans 341 residues: Aromatic amino acid aminotransferase (341 aa).

An N6-(pyridoxal phosphate)lysine modification is found at K213.

The protein belongs to the class-II pyridoxal-phosphate-dependent aminotransferase family. As to quaternary structure, homodimer. It depends on pyridoxal 5'-phosphate as a cofactor.

It catalyses the reaction an aromatic L-alpha-amino acid + 2-oxoglutarate = an aromatic oxo-acid + L-glutamate. Its function is as follows. Aminotransferase that catalyzes the conversion of aromatic amino acids and 2-oxoglutarate into corresponding aromatic oxo acids and L-glutamate. This is Aromatic amino acid aminotransferase from Corynebacterium glutamicum (strain R).